An 869-amino-acid polypeptide reads, in one-letter code: MAGYTPMIQQYLKIKAEYQDAFLFFRLGDFYEMFFEDAKKASQELEITLTSRDGGSSERIPMCGVPYHSCSSYIEQLIKKGYKVAICEQVEDPKSAKGVVKREVVQLITPGTVMDGKGIHENENNFIASVSKFQHTYGLAFSDLTTGENLVTAIERLDDVVSEIYSVGAREIVVSRNLDEKDVAMLKERCGATISFEDEQADEVPGIVNGLGSKELVDTFMRLYVYLKRTQKRSLDHLQNVQAYELEEAMKIDLYSKRNLELTETIRSKNKKGSLLWLLDETKTAMGGRLLKQWIDRPLIRKGQIEERQEIVETLIAHLFEREDLRERLKEVYDLERLAGRVAYGNVNARDLIQLKESLKQVPAIKQLVGSLDHPKAKARAEKIDPCGDLLNLLEDALYENPPLSLKEGNLIKDGYHAKLDEYRDASKNGKDWIARLEQQEREYTGIRSLKVGFNKVFGYYIEVTKANIHLLEEGRYERKQTLTNAERYITPELKEKEALILEAENNICELEYELFSELRSKVKEYIPRLQQLAKMMSELDVLQCFATISENRHYVKPEFSDDVVQVIDGRHPVVEKVMDSQSYVPNSCEMGKGRQMLLITGPNMSGKSTYMRQMALISILAQIGCFVPAKKAVLPIFDQIFTRIGAADDLISGQSTFMVEMLEAKNAIVHATKNSLILFDEIGRGTSTYDGMALAQAIIEYVHEHIGAKTLFSTHYHELTSLEEKLDDLKNVHVRAEEYEGKVVFLHQIKEGAADKSYGIHVAQLAELPDGLISRAKTILKELESGAKEAAPSTAPNMVKEAAEEAAATVADQPAQLSFFETDKPIEKETKLSKKEQAVLAEFKAMDLLDMTPIQVMNELYRLQKKLK.

Residue G602–S609 coordinates ATP.

The protein belongs to the DNA mismatch repair MutS family.

In terms of biological role, this protein is involved in the repair of mismatches in DNA. It is possible that it carries out the mismatch recognition step. This protein has a weak ATPase activity. This Bacillus licheniformis (strain ATCC 14580 / DSM 13 / JCM 2505 / CCUG 7422 / NBRC 12200 / NCIMB 9375 / NCTC 10341 / NRRL NRS-1264 / Gibson 46) protein is DNA mismatch repair protein MutS.